The chain runs to 142 residues: Baculoviral IAP repeat-containing protein 5 (142 aa).

One copy of the BIR repeat lies at 18-88 (RVSTFKNWPF…KHSSGCAFLS (71 aa)). Ser20 is subject to Phosphoserine; by AURKC. An N6-acetyllysine modification is found at Lys23. Thr34 is modified (phosphothreonine; by CDK1 and CDK15). Thr48 is subject to Phosphothreonine. The Zn(2+) site is built by Cys57, Cys60, His77, and Cys84. N6-acetyllysine occurs at positions 90, 110, 112, and 115. Thr117 carries the post-translational modification Phosphothreonine; by AURKB. Position 129 is an N6-acetyllysine (Lys129).

The protein belongs to the IAP family. In terms of assembly, monomer or homodimer. Exists as a homodimer in the apo state and as a monomer in the CPC-bound state. The monomer protects cells against apoptosis more efficiently than the dimer. Only the dimeric form is capable of enhancing tubulin stability in cells. When phosphorylated, interacts with LAMTOR5/HBXIP; the resulting complex binds pro-CASP9, as well as active CASP9, but much less efficiently. Component of the chromosomal passenger complex (CPC) composed of at least BIRC5/survivin, CDCA8/borealin, INCENP, AURKB or AURKC; in the complex forms a triple-helix bundle-based subcomplex with INCENP and CDCA8. Interacts with JTB. Interacts (via BIR domain) with histone H3 phosphorylated at 'Thr-3' (H3pT3). Interacts with EVI5. Interacts with GTP-bound RAN in both the S and M phases of the cell cycle. Interacts with USP9X. Interacts with tubulin. Interacts with BIRC2/c-IAP1. The acetylated form at Lys-129 interacts with STAT3. The monomeric form deacetylated at Lys-129 interacts with XPO1/CRM1. The monomeric form interacts with XIAP/BIRC4. Both the dimeric and monomeric form can interact with DIABLO/SMAC. Interacts with BIRC6/bruce. Interacts with FBXL7; this interaction facilitates the polyubiquitination and subsequent proteasomal degradation of BIRC5 by the SCF(FBXL7) E3 ubiquitin-protein ligase complex. In terms of processing, ubiquitinated by the Cul9-RING ubiquitin-protein ligase complex, leading to its degradation. Ubiquitination is required for centrosomal targeting. Deubiquitinated by USP35 or USP38; leading to stabilization. Acetylation at Lys-129 results in its homodimerization, while deacetylation promotes the formation of monomers which heterodimerize with XPO1/CRM1 which facilitates its nuclear export. The acetylated form represses STAT3 transactivation. The dynamic equilibrium between its acetylation and deacetylation at Lys-129 determines its interaction with XPO1/CRM1, its subsequent subcellular localization, and its ability to inhibit STAT3 transactivation. Post-translationally, in vitro phosphorylation at Thr-117 by AURKB prevents interaction with INCENP and localization to mitotic chromosomes. Phosphorylation at Thr-48 by CK2 is critical for its mitotic and anti-apoptotic activities. Phosphorylation at Thr-34 by CDK15 is critical for its anti-apoptotic activity. Phosphorylation at Ser-20 by AURKC is critical for regulation of proper chromosome alignment and segregation, and possibly cytokinesis.

It localises to the cytoplasm. It is found in the nucleus. Its subcellular location is the chromosome. The protein localises to the centromere. The protein resides in the cytoskeleton. It localises to the spindle. It is found in the kinetochore. Its subcellular location is the midbody. In terms of biological role, multitasking protein that has dual roles in promoting cell proliferation and preventing apoptosis. Component of a chromosome passage protein complex (CPC) which is essential for chromosome alignment and segregation during mitosis and cytokinesis. Acts as an important regulator of the localization of this complex; directs CPC movement to different locations from the inner centromere during prometaphase to midbody during cytokinesis and participates in the organization of the center spindle by associating with polymerized microtubules. Involved in the recruitment of CPC to centromeres during early mitosis via association with histone H3 phosphorylated at 'Thr-3' (H3pT3) during mitosis. The complex with RAN plays a role in mitotic spindle formation by serving as a physical scaffold to help deliver the RAN effector molecule TPX2 to microtubules. May counteract a default induction of apoptosis in G2/M phase. The acetylated form represses STAT3 transactivation of target gene promoters. May play a role in neoplasia. Inhibitor of CASP3 and CASP7. Essential for the maintenance of mitochondrial integrity and function. The sequence is that of Baculoviral IAP repeat-containing protein 5 (BIRC5) from Canis lupus familiaris (Dog).